A 109-amino-acid polypeptide reads, in one-letter code: MNIQALMQQAQTMQKKVEANVENAKKDLANKEVHAEAGSGLVKVTMTGRHVVKRLTIDPSLLEDEPDMIEDLIAAAINDAVRQADELYETTMAGATSGMGLPPGMQGMF.

The protein belongs to the YbaB/EbfC family. As to quaternary structure, homodimer.

The protein resides in the cytoplasm. The protein localises to the nucleoid. Binds to DNA and alters its conformation. May be involved in regulation of gene expression, nucleoid organization and DNA protection. In Psychrobacter arcticus (strain DSM 17307 / VKM B-2377 / 273-4), this protein is Nucleoid-associated protein Psyc_0793.